We begin with the raw amino-acid sequence, 496 residues long: Cobyric acid synthase (496 aa).

The 195-residue stretch at 264-458 (HTRIAVVAYP…LHGLFEDAAV (195 aa)) folds into the GATase cobBQ-type domain. Cys-345 acts as the Nucleophile in catalysis. His-450 is an active-site residue.

This sequence belongs to the CobB/CobQ family. CobQ subfamily.

Its pathway is cofactor biosynthesis; adenosylcobalamin biosynthesis. In terms of biological role, catalyzes amidations at positions B, D, E, and G on adenosylcobyrinic A,C-diamide. NH(2) groups are provided by glutamine, and one molecule of ATP is hydrogenolyzed for each amidation. The chain is Cobyric acid synthase from Acidovorax ebreus (strain TPSY) (Diaphorobacter sp. (strain TPSY)).